A 159-amino-acid chain; its full sequence is MTSEDQSLKKQKLESTQSLKVYLRSPKGKVPTKGSALAAGYDLYSAEAATIPAHGQGLVSTDISIIVPIGTYGRVAPRSGLAVKHGISTGAGVIDADYRGEVKVVLFNHSEKDFEIKEGDRIAQLVLEQIVNADIKEISLEELDNTERGEGGFGSTGKN.

DUMP contacts are provided by serine 79, glycine 92, aspartate 95, tyrosine 98, lysine 103, arginine 148, phenylalanine 153, and glycine 154.

Belongs to the dUTPase family. As to quaternary structure, homotrimer. Mg(2+) serves as cofactor.

The enzyme catalyses dUTP + H2O = dUMP + diphosphate + H(+). It functions in the pathway pyrimidine metabolism; dUMP biosynthesis; dUMP from dCTP (dUTP route): step 2/2. Involved in nucleotide metabolism via production of dUMP, the immediate precursor of thymidine nucleotides, and decreases the intracellular concentration of dUTP so that uracil cannot be incorporated into DNA. This chain is Deoxyuridine 5'-triphosphate nucleotidohydrolase (DUT1), found in Candida albicans (strain SC5314 / ATCC MYA-2876) (Yeast).